Consider the following 264-residue polypeptide: Tropomyosin Cha f 1.0101 (264 aa).

At methionine 1 the chain carries N-acetylmethionine. 2 disordered regions span residues 1 to 56 and 92 to 126; these read MDAI…VENE and IQLP…SERM. A coiled-coil region spans residues 1-264; it reads MDAIKKKMQA…RLEDELVNEK (264 aa). The segment covering 12–45 has biased composition (basic and acidic residues); sequence KLEKDNAMDRADTLEQQNKEANLRAEKTEEEIRA.

This sequence belongs to the tropomyosin family. Homodimer. Expressed in muscle (at protein level). Expressed in claw muscles.

Its function is as follows. Tropomyosin, in association with the troponin complex, plays a central role in the calcium dependent regulation of muscle contraction. The chain is Tropomyosin Cha f 1.0101 from Charybdis feriata (Crucifix crab).